The following is a 397-amino-acid chain: Mannosylglycerate synthase (397 aa).

Residues 7-11 (PFKHE), Ile-35, Gln-66, Lys-76, Asp-100, and 100-101 (DA) each bind GDP-alpha-D-mannose. Asp-102 serves as a coordination point for a divalent metal cation. (R)-glycerate-binding positions include Arg-131 and 136–139 (AMIT). 2 residues coordinate GDP-alpha-D-mannose: Leu-163 and Asp-192. Residue His-217 participates in a divalent metal cation binding. GDP-alpha-D-mannose contacts are provided by Arg-218 and Tyr-220.

It belongs to the glycosyltransferase 78 family. In terms of assembly, homotetramer. Dimer of dimers. The cofactor is Mg(2+). Ca(2+) serves as cofactor. Requires Mn(2+) as cofactor. Ni(2+) is required as a cofactor. It depends on Co(2+) as a cofactor.

The catalysed reaction is (R)-glycerate + GDP-alpha-D-mannose = (2R)-2-O-(alpha-D-mannosyl)-glycerate + GDP + H(+). Inhibited by GDP. Involved in the biosynthesis of the stress protectant 2-O-alpha-D-mannosyl glycerate (MG) which is produced in response to growth at supraoptimal temperature and salinity, and protects several enzymes against inactivation by temperature, freeze-drying and osmotic stress. Catalyzes the condensation of alpha-GDP-D-mannose (GDP-Man) with D-glycerate to produce alpha-mannosyl-D-glycerate. It is specific for GDP-Man, but it can also use alpha-GDP-D-glucose (GDP-Glc), beta-GDP-D-fructose, alpha-UDP-D-mannose and alpha-UDP-D-glucose as sugar donors. It is specific for D-glycerate, but it can also use D-lactate and glycolate as sugar acceptors. This reaction occurs with a net retention of anomeric configuration; the newly formed glycosidic linkage has the same alpha configuration as the sugar donor. This chain is Mannosylglycerate synthase (mgs), found in Rhodothermus marinus (Rhodothermus obamensis).